A 358-amino-acid chain; its full sequence is Endo-1,4-beta-xylanase B (358 aa).

An N-terminal signal peptide occupies residues 1–17 (MRFSASLLLALTGSAAA). In terms of domain architecture, GH10 spans 40–352 (QGLDAAMKAA…KAAYNAFLRG (313 aa)). Asn-136 carries an N-linked (GlcNAc...) asparagine glycan. The Proton donor role is filled by Glu-166. Glu-274 acts as the Nucleophile in catalysis.

Belongs to the glycosyl hydrolase 10 (cellulase F) family.

Its subcellular location is the secreted. The enzyme catalyses Endohydrolysis of (1-&gt;4)-beta-D-xylosidic linkages in xylans.. The protein operates within glycan degradation; xylan degradation. Its activity is regulated as follows. Partial inhibition of activity is detected in the presence of Ag(+), Cu2(+) and SDS. Like most fungal xylanases, activity is completely inhibited by Hg(2+) since Hg(2+) could interact with tryptophan residues and oxidize the indole ring. Beta-mercaptoethanol enhances the enzymatic activity by counteracting the oxidation effects of the S-S linkage between cysteine residues. Endo-1,4-beta-xylanase involved in the hydrolysis of xylan, a major structural heterogeneous polysaccharide found in plant biomass representing the second most abundant polysaccharide in the biosphere, after cellulose. Is more active on soluble wheat arabinoxylan (defined as 100%) than on birchwood xylan (75.4%) and beechwood xylan (70.8%), and less active on insoluble wheat arabinoxylan (17.4%). Xylose is the major hydrolysis product of XynB. This chain is Endo-1,4-beta-xylanase B, found in Humicola insolens (Soft-rot fungus).